We begin with the raw amino-acid sequence, 707 residues long: MDANLRRKLDELPAEPGCYLMKDRAGEVVYVGKASSLRSRVRSYFDPGRGDQRAFVALLDELLGDLEVIVTRSEKEAVLLENELIKKHRPRFNVRLRDDKDFIVLKLDERHPYPRLEVRRAREKRQPGARYFGPYSSASSIRETLRMVNRHFQLRTCSDHVFDHRKRPCILYQIHRCPAPCVYEVAAEEYRQSVEDAVEFLEGREGELVERLRGRMAGAAEGLRFEEAARLRDQLQAVERSLEKQRVLMSDRGDRDVIGLYREGPDLVVQVLSMRAGKLQDAQAHPFREQEFPDEEILSSFLSLYYEHTDAPDEILVPLEPVQAEALADVLSERRGRRVRLLTPQRGAKADLLDVARRNAEQGFRAWHEHDERREQALAAVARALHLARPPRWMECYDISTFQGALAVGSGVSMKDGEPDKANYRRYKVKAVAGQDDFAMLHEVITRRLRRALGEGQLPDLIVIDGGKGQLNAALAAAKDLGVPTRPSPGNPDAPFVELVGLAKSRLVDGPSLGTARVVGRRGRRAEARLADAAEAAEKGFVSELARSPERVFLPGRKDPVVLRQNSAELFLLARLRDEAHRFAITFHRKLRRERNFQSVLEEIPGIGEGRKRALLRHFGALRRVREATPEEIAQVEGFGPRQAAAVHAFFHRPDAPPIAADEPSGAPAGAPGGGPAEASPEAVAAATEAEIDAALADEDASPEPAA.

Positions 14–94 (AEPGCYLMKD…IKKHRPRFNV (81 aa)) constitute a GIY-YIG domain. In terms of domain architecture, UVR spans 206-241 (GELVERLRGRMAGAAEGLRFEEAARLRDQLQAVERS). A disordered region spans residues 655-707 (DAPPIAADEPSGAPAGAPGGGPAEASPEAVAAATEAEIDAALADEDASPEPAA). Low complexity-rich tracts occupy residues 660–670 (AADEPSGAPAG) and 677–689 (AEAS…AATE). Residues 690–707 (AEIDAALADEDASPEPAA) show a composition bias toward acidic residues.

The protein belongs to the UvrC family. Interacts with UvrB in an incision complex.

It is found in the cytoplasm. Its function is as follows. The UvrABC repair system catalyzes the recognition and processing of DNA lesions. UvrC both incises the 5' and 3' sides of the lesion. The N-terminal half is responsible for the 3' incision and the C-terminal half is responsible for the 5' incision. This is UvrABC system protein C from Anaeromyxobacter dehalogenans (strain 2CP-1 / ATCC BAA-258).